A 367-amino-acid chain; its full sequence is MTEAFPNGKTPQHVLGPPAPAAVFLVLTVRSGAEAEAKDFLGDIAGVVRSVGFRAREDHLSCVTGIGAELWDRMFDAPRPAGLHPFIEQRGDVHTAPSTPGDLLFHIRARRMDLCFELARQLVGELGDAVSVVDEVHGFRYFDERDIMGFVDGTENPEDQEAVDSVFTPTGGDDPASSTYVIVQKYTHDMAAWEALSVEDQEAAFGRHKLSDMEFPDEDKAPNSHLILNTIEDEDGTEHKIVRDNMVFGSVESGEFGTYFIGYAADVSVTEQMLENMFIGNPRGTYDRILDFSTAQTGGLFFVPSQDFLDDPDGELAAAEPSDAQNDDPASASARIEETDPPNPASADDPAPADDSLGIGSLRRRDQ.

The active-site Proton acceptor is the aspartate 152. Heme is bound at residue histidine 225. Residues 311–367 (DPDGELAAAEPSDAQNDDPASASARIEETDPPNPASADDPAPADDSLGIGSLRRRDQ) are disordered. Low complexity predominate over residues 345 to 356 (ASADDPAPADDS). The segment at 358–365 (GIGSLRRR) is targeting peptide.

The protein belongs to the DyP-type peroxidase family. As to quaternary structure, homohexamer. Heme b serves as cofactor.

The protein localises to the encapsulin nanocompartment. Cargo protein of a type 1 encapsulin nanocompartment. Has both general peroxidase activity and dye-decolorizing activity. Can catalyze the oxidation of both protoporphyrinogen IX and coproporphyrinogen III to their corresponding porphyrins. Also efficiently decolorizes the dyes alizarin red and Cibacron blue F3GA. This cargo-loaded encapsulin nanocompartment is probably involved in protection against oxidative damage. This Brevibacterium linens protein is Dye-decolorizing peroxidase.